The primary structure comprises 136 residues: Small ribosomal subunit protein uS8c (136 aa).

Belongs to the universal ribosomal protein uS8 family. Part of the 30S ribosomal subunit.

The protein localises to the plastid. The protein resides in the chloroplast. One of the primary rRNA binding proteins, it binds directly to 16S rRNA central domain where it helps coordinate assembly of the platform of the 30S subunit. The sequence is that of Small ribosomal subunit protein uS8c (rps8) from Morus indica (Mulberry).